A 542-amino-acid polypeptide reads, in one-letter code: Doublesex- and mab-3-related transcription factor A2 (542 aa).

The segment at residues 70–117 is a DNA-binding region (DM); it reads CARCRNHGVVSALKGHKRYCRWKDCLCAKCTLIAERQRVMAAQVALRR. The disordered stretch occupies residues 201–316; that stretch reads LQAGRPGSPL…GGSGPRQRTP (116 aa). In terms of domain architecture, DMA spans 314–349; it reads RTPLDILTRVFPGHRRGVLELVLQGCGGDVVQAIEQ.

It belongs to the DMRT family. In terms of tissue distribution, expressed in testis.

It localises to the nucleus. Its function is as follows. May be involved in sexual development. The sequence is that of Doublesex- and mab-3-related transcription factor A2 (DMRTA2) from Homo sapiens (Human).